A 492-amino-acid chain; its full sequence is Beclin 1-associated autophagy-related key regulator (492 aa).

Serine 29 is modified (phosphoserine). The stretch at 70 to 180 (RDRERFIDKK…KLGDLVEKKT (111 aa)) forms a coiled coil. Disordered regions lie at residues 213-232 (TSGR…MTSS) and 411-473 (GVAG…AGGM). Polar residues predominate over residues 222 to 232 (SSETDSAMTSS). At serine 416 the chain carries Phosphoserine. A compositionally biased stretch (acidic residues) spans 424–433 (VSDEETDLGT). Residue threonine 429 is modified to Phosphothreonine. Positions 447-473 (PSQPVEVSQSQSTQASPPIASSSAGGM) are enriched in low complexity.

This sequence belongs to the ATG14 family. Forms homooligomers; homo-oligomerization is essential for the roles in membrane tethering and enhancement of SNARE-mediated fusion. Component of the PI3K (PI3KC3/PI3K-III/class III phosphatidylinositol 3-kinase) complex I (PI3KC3-C1) in which the core composed of the catalytic subunit PIK3C3, the regulatory subunit PIK3R4 and BECN1 is associated with ATG14. PI3KC3-C1 displays a V-shaped architecture with PIK3R4 serving as a bridge between PIK3C3 and the ATG14:BECN1 subcomplex. PI3KC3-C1 can associate with further regulatory subunits. Interacts with PIK3CB. Interacts (via coiled-coil domain) with BECN2 (via coiled-coil domain); this interaction is tighter than BECN2 self-association. Interacts with the STX17-SNAP29 binary t-SNARE complex. Interacts with NRBF2. Interacts with PIK3C3 and BECN1; this interaction is increased in the absence of TMEM39A. Interacts with STEEP1; the interaction is required for trafficking of STING1 from the endoplasmic reticulum. Interacts with ARMC3 (via ARM domains). In terms of processing, ubiquitinated via 'Lys-6', 'Lys-11' and 'Lys-63'-linked polyubiquitin chains on multiple lysines by MARCHF7, leading to ATG14 aggregation and loss of interaction with STX17.

It localises to the cytoplasm. It is found in the endoplasmic reticulum membrane. The protein localises to the preautophagosomal structure membrane. Functionally, required for both basal and inducible autophagy. Determines the localization of the autophagy-specific PI3-kinase complex. Plays a role in autophagosome formation and MAP1LC3/LC3 conjugation to phosphatidylethanolamine. Promotes BECN1 translocation from the trans-Golgi network to autophagosomes. Enhances PIK3C3 activity in a BECN1-dependent manner. Essential for the autophagy-dependent phosphorylation of BECN1. Stimulates the phosphorylation of BECN1, but suppresses the phosphorylation PIK3C3 by AMPK. Binds to STX17-SNAP29 binary t-SNARE complex on autophagosomes and primes it for VAMP8 interaction to promote autophagosome-endolysosome fusion. Modulates the hepatic lipid metabolism. The sequence is that of Beclin 1-associated autophagy-related key regulator from Rattus norvegicus (Rat).